Reading from the N-terminus, the 186-residue chain is Elongation factor P (186 aa).

Belongs to the elongation factor P family.

The protein localises to the cytoplasm. The protein operates within protein biosynthesis; polypeptide chain elongation. Involved in peptide bond synthesis. Stimulates efficient translation and peptide-bond synthesis on native or reconstituted 70S ribosomes in vitro. Probably functions indirectly by altering the affinity of the ribosome for aminoacyl-tRNA, thus increasing their reactivity as acceptors for peptidyl transferase. The polypeptide is Elongation factor P (Prochlorococcus marinus (strain MIT 9515)).